The sequence spans 421 residues: Dihydroorotase (421 aa).

His-60 and His-62 together coordinate Zn(2+). Substrate is bound by residues 62-64 and Asn-94; that span reads HFR. Residues Asp-151, His-178, and His-231 each contribute to the Zn(2+) site. Asn-277 serves as a coordination point for substrate. Asp-304 provides a ligand contact to Zn(2+). The active site involves Asp-304. His-308 contacts substrate.

It belongs to the metallo-dependent hydrolases superfamily. DHOase family. Class I DHOase subfamily. Requires Zn(2+) as cofactor.

It catalyses the reaction (S)-dihydroorotate + H2O = N-carbamoyl-L-aspartate + H(+). The protein operates within pyrimidine metabolism; UMP biosynthesis via de novo pathway; (S)-dihydroorotate from bicarbonate: step 3/3. Its function is as follows. Catalyzes the reversible cyclization of carbamoyl aspartate to dihydroorotate. This is Dihydroorotase from Clostridioides difficile (strain 630) (Peptoclostridium difficile).